The following is a 1502-amino-acid chain: DNA-directed RNA polymerase subunit beta' (1502 aa).

Residues Cys60, Cys62, Cys75, and Cys78 each coordinate Zn(2+). The disordered stretch occupies residues 265–293 (RKQRDLEDAEQLTGAERERKEYEASQERE). Basic and acidic residues predominate over residues 279–293 (AERERKEYEASQERE). Mg(2+)-binding residues include Asp626, Asp628, and Asp630. Residues Cys1002, Cys1075, Cys1082, and Cys1085 each coordinate Zn(2+). The interval 1472 to 1502 (SDDNGDEVGKNGEFADETPFTGDSDDRDNEI) is disordered.

It belongs to the RNA polymerase beta' chain family. As to quaternary structure, the RNAP catalytic core consists of 2 alpha, 1 beta, 1 beta' and 1 omega subunit. When a sigma factor is associated with the core the holoenzyme is formed, which can initiate transcription. Requires Mg(2+) as cofactor. Zn(2+) is required as a cofactor.

It carries out the reaction RNA(n) + a ribonucleoside 5'-triphosphate = RNA(n+1) + diphosphate. Its function is as follows. DNA-dependent RNA polymerase catalyzes the transcription of DNA into RNA using the four ribonucleoside triphosphates as substrates. The polypeptide is DNA-directed RNA polymerase subunit beta' (Roseiflexus castenholzii (strain DSM 13941 / HLO8)).